The chain runs to 278 residues: HTH-type transcriptional activator RhaS (278 aa).

In terms of domain architecture, HTH araC/xylS-type spans 174–272 (NQLMAWLEDH…NWSPRDIRQG (99 aa)). 2 consecutive DNA-binding regions (H-T-H motif) follow at residues 191–212 (EAVA…KQHT) and 239–262 (VTEI…RREF).

Binds DNA as a dimer.

The protein resides in the cytoplasm. Functionally, activates expression of the rhaBAD and rhaT operons. The chain is HTH-type transcriptional activator RhaS from Salmonella agona (strain SL483).